The chain runs to 414 residues: Esterase FrsA (414 aa).

This sequence belongs to the FrsA family.

The catalysed reaction is a carboxylic ester + H2O = an alcohol + a carboxylate + H(+). Functionally, catalyzes the hydrolysis of esters. In Salmonella dublin (strain CT_02021853), this protein is Esterase FrsA.